The sequence spans 155 residues: Superoxide dismutase [Cu-Zn] (155 aa).

Cu cation-binding residues include His-47, His-49, and His-64. An intrachain disulfide couples Cys-58 to Cys-147. Residues His-64, His-72, His-81, and Asp-84 each coordinate Zn(2+). His-121 serves as a coordination point for Cu cation. Arg-144 serves as a coordination point for substrate.

The protein belongs to the Cu-Zn superoxide dismutase family. As to quaternary structure, homodimer. Cu cation is required as a cofactor. The cofactor is Zn(2+).

The protein localises to the cytoplasm. It catalyses the reaction 2 superoxide + 2 H(+) = H2O2 + O2. Its function is as follows. Destroys radicals which are normally produced within the cells and which are toxic to biological systems. This is Superoxide dismutase [Cu-Zn] (SOD1) from Kluyveromyces lactis (strain ATCC 8585 / CBS 2359 / DSM 70799 / NBRC 1267 / NRRL Y-1140 / WM37) (Yeast).